We begin with the raw amino-acid sequence, 518 residues long: Protein FAM98A (518 aa).

2 disordered regions span residues Gly-300 to Ser-415 and Gly-434 to Ser-518. Over residues Val-302–Glu-311 the composition is skewed to basic and acidic residues. Gly residues-rich tracts occupy residues Gly-349–Gly-364, Trp-383–Asp-396, and Gln-405–Ser-415. Basic and acidic residues predominate over residues Arg-447–Gly-459. The span at Gly-460 to Gly-484 shows a compositional bias: gly residues. A compositionally biased stretch (low complexity) spans Tyr-488 to Gln-504. A compositionally biased stretch (polar residues) spans Tyr-505–Ser-518.

Belongs to the FAM98 family. Interacts (via N- and C-terminus) with DDX1. Interacts (via N- and C-terminus) with C14orf166. Interacts with FAM98B. Interacts with PLEKHM1 (via N- and C-terminus).

Its function is as follows. Positively stimulates PRMT1-induced protein arginine methylation. Involved in skeletal homeostasis. Positively regulates lysosome peripheral distribution and ruffled border formation in osteoclasts. The chain is Protein FAM98A from Pongo abelii (Sumatran orangutan).